The following is a 389-amino-acid chain: Serpin-Z3 (389 aa).

The interval 337–361 (GTEAAAVSVAIMMPQCLMRNPDFVA) is RCL.

The protein belongs to the serpin family.

Probable serine protease inhibitor. The sequence is that of Serpin-Z3 from Arabidopsis thaliana (Mouse-ear cress).